Reading from the N-terminus, the 218-residue chain is ER lumen protein-retaining receptor (218 aa).

Topologically, residues 1–2 are lumenal; that stretch reads MN. Residues 3-23 traverse the membrane as a helical segment; that stretch reads LFSFLGDMLHLGSMLILLFKI. The Cytoplasmic portion of the chain corresponds to 24 to 57; sequence KNDKSCAGVSLKSQILFTIVFTARYLDLFTNYVS. A helical transmembrane segment spans residues 58–78; the sequence is LYITFMKITYIAVSYYTLHLI. Residues 79-94 are Lumenal-facing; it reads ARKYKFTYDKDHDTFK. The helical transmembrane segment at 95-115 threads the bilayer; sequence IVYLIASCAILSLITYDKTTI. Topologically, residues 116–123 are cytoplasmic; sequence GIYSTFLE. The helical transmembrane segment at 124–144 threads the bilayer; it reads ILWTFSIYLESIAILPQLILL. The Lumenal segment spans residues 145–152; that stretch reads QRTGEVEA. A helical transmembrane segment spans residues 153-173; it reads LTSNYIVLLGGYRAFYLFNWI. The Cytoplasmic portion of the chain corresponds to 174 to 184; that stretch reads YRITFYNWSGK. Residues 185 to 205 form a helical membrane-spanning segment; the sequence is IEMLSGLLQTILYADFFYYYA. Over 206-218 the chain is Lumenal; sequence KSRMYGKKLVLPQ.

This sequence belongs to the ERD2 family.

The protein resides in the endoplasmic reticulum membrane. Required for the retention of luminal endoplasmic reticulum proteins. Determines the specificity of the luminal ER protein retention system. Also required for normal vesicular traffic through the Golgi. This Dictyostelium discoideum (Social amoeba) protein is ER lumen protein-retaining receptor (kdelr).